We begin with the raw amino-acid sequence, 150 residues long: Small ribosomal subunit protein eS19S (150 aa).

It belongs to the eukaryotic ribosomal protein eS19 family.

The sequence is that of Small ribosomal subunit protein eS19S (RPS19S) from Ascaris suum (Pig roundworm).